The primary structure comprises 150 residues: Small ribosomal subunit protein uS11y (150 aa).

The segment at 129–150 (EDVTPVPTDSTRRKGGRRGRRL) is disordered. Positions 141-150 (RKGGRRGRRL) are enriched in basic residues.

It belongs to the universal ribosomal protein uS11 family.

This chain is Small ribosomal subunit protein uS11y, found in Zea mays (Maize).